Here is a 530-residue protein sequence, read N- to C-terminus: Glutamate--cysteine ligase (530 aa).

The protein belongs to the glutamate--cysteine ligase type 1 family. Type 1 subfamily.

It catalyses the reaction L-cysteine + L-glutamate + ATP = gamma-L-glutamyl-L-cysteine + ADP + phosphate + H(+). The protein operates within sulfur metabolism; glutathione biosynthesis; glutathione from L-cysteine and L-glutamate: step 1/2. The polypeptide is Glutamate--cysteine ligase (Pseudomonas entomophila (strain L48)).